Consider the following 338-residue polypeptide: MTDQAAFDTNIVTLTRFVMEEGRKARGTGEMTQLLNSLCTAVKAISTAVRKAGIAHLYGIAGSTNVTGDQVKKLDVLSNDLVINVLKSSFATCVLVSEEDKNAIIVEPEKRGKYVVCFDPLDGSSNIDCLVSIGTIFGIYRKNSTDEPSEKDALQPGRNLVAAGYALYGSATMLVLAMVNGVNCFMLDPAIGEFILVDRDVKIKKKGSIYSINEGYAKEFDPAITEYIQRKKFPPDNSAPYGARYVGSMVADVHRTLVYGGIFMYPANKKSPKGKLRLLYECNPMAYVMEKAGGLATTGKEAVLDIVPTDIHQRAPIILGSPEDVTELLEIYQKHAAK.

Thr-2 carries the N-acetylthreonine modification. Residues 18-22 and 28-32 each bind AMP; these read VMEEG and TGEMT. Mg(2+) is bound by residues Asp-69 and Glu-98. 113 to 114 is an AMP binding site; it reads KY. Positions 119, 121, and 122 each coordinate Mg(2+). Residue 122-125 coordinates substrate; that stretch reads DGSS. Arg-141 is a binding site for AMP. Lys-151 carries the post-translational modification N6-succinyllysine. Phosphoserine; by PKA is present on Ser-208. Residues 213 to 216, 244 to 249, Tyr-265, and 275 to 277 each bind substrate; these read NEGY, RYVGSM, and KLR. Residues Tyr-216, Tyr-245, and Tyr-265 each carry the phosphotyrosine modification. Glu-281 contributes to the Mg(2+) binding site.

Belongs to the FBPase class 1 family. Homotetramer. Requires Mg(2+) as cofactor.

It catalyses the reaction beta-D-fructose 1,6-bisphosphate + H2O = beta-D-fructose 6-phosphate + phosphate. The protein operates within carbohydrate biosynthesis; gluconeogenesis. Subject to complex allosteric regulation. The enzyme can assume an active R-state, or an inactive T-state. Intermediate conformations may exist. AMP acts as an allosteric inhibitor. AMP binding affects the turnover of bound substrate and not the affinity for substrate. Fructose 2,6-bisphosphate acts as a competitive inhibitor. Fructose 2,6-bisphosphate and AMP have synergistic effects. Catalyzes the hydrolysis of fructose 1,6-bisphosphate to fructose 6-phosphate in the presence of divalent cations, acting as a rate-limiting enzyme in gluconeogenesis. Plays a role in regulating glucose sensing and insulin secretion of pancreatic beta-cells. Appears to modulate glycerol gluconeogenesis in liver. Important regulator of appetite and adiposity; increased expression of the protein in liver after nutrient excess increases circulating satiety hormones and reduces appetite-stimulating neuropeptides and thus seems to provide a feedback mechanism to limit weight gain. In Sus scrofa (Pig), this protein is Fructose-1,6-bisphosphatase 1 (FBP1).